The chain runs to 221 residues: Fanconi anemia core complex-associated protein 24 (221 aa).

As to quaternary structure, belongs to the multisubunit FA complex composed of FANCA, FANCB, FANCC, FANCE, FANCF, FANCG, FANCL/PHF9, FANCM and FAAP24. Interacts with FANCM.

It localises to the nucleus. Its function is as follows. Plays a role in DNA repair through recruitment of the FA core complex to damaged DNA. Regulates FANCD2 monoubiquitination upon DNA damage. Induces chromosomal instability as well as hypersensitivity to DNA cross-linking agents, when repressed. Targets FANCM/FAAP24 complex to the DNA, preferentially to single strand DNA. This chain is Fanconi anemia core complex-associated protein 24, found in Mus musculus (Mouse).